The primary structure comprises 90 residues: Sec-independent protein translocase protein TatA (90 aa).

A helical transmembrane segment spans residues 1–21; it reads MGLPGGWELVLIVGVLVLLFG. Positions 42–60 are enriched in basic and acidic residues; the sequence is EARGMKEDEEAAKREKQAK. Positions 42–90 are disordered; sequence EARGMKEDEEAAKREKQAKSEPQQLTAGESSAPTVASPVEETQRNDSKK. Over residues 61–75 the composition is skewed to polar residues; the sequence is SEPQQLTAGESSAPT.

The protein belongs to the TatA/E family. As to quaternary structure, the Tat system comprises two distinct complexes: a TatABC complex, containing multiple copies of TatA, TatB and TatC subunits, and a separate TatA complex, containing only TatA subunits. Substrates initially bind to the TatABC complex, which probably triggers association of the separate TatA complex to form the active translocon.

Its subcellular location is the cell membrane. In terms of biological role, part of the twin-arginine translocation (Tat) system that transports large folded proteins containing a characteristic twin-arginine motif in their signal peptide across membranes. TatA could form the protein-conducting channel of the Tat system. This is Sec-independent protein translocase protein TatA from Saccharopolyspora erythraea (strain ATCC 11635 / DSM 40517 / JCM 4748 / NBRC 13426 / NCIMB 8594 / NRRL 2338).